The following is a 470-amino-acid chain: ATP synthase subunit beta (470 aa).

Position 155 to 162 (155 to 162 (GGAGVGKT)) interacts with ATP.

Belongs to the ATPase alpha/beta chains family. F-type ATPases have 2 components, CF(1) - the catalytic core - and CF(0) - the membrane proton channel. CF(1) has five subunits: alpha(3), beta(3), gamma(1), delta(1), epsilon(1). CF(0) has three main subunits: a(1), b(2) and c(9-12). The alpha and beta chains form an alternating ring which encloses part of the gamma chain. CF(1) is attached to CF(0) by a central stalk formed by the gamma and epsilon chains, while a peripheral stalk is formed by the delta and b chains.

It localises to the cell membrane. It carries out the reaction ATP + H2O + 4 H(+)(in) = ADP + phosphate + 5 H(+)(out). Functionally, produces ATP from ADP in the presence of a proton gradient across the membrane. The catalytic sites are hosted primarily by the beta subunits. This chain is ATP synthase subunit beta, found in Staphylococcus aureus (strain MW2).